The sequence spans 483 residues: MELKNKKWTDEEFHKQREEVLQQWPTGKEVDLQEAVDYLKKIPAEKNFAEKLVLAKKKGITMAQPRAGVALLDEHIELLRYLQDEGGADFLPSTIDAYTRQNRYDECENGIKESEKAGRSLLNGFPGVNYGVKGCRKVLEAVNLPLQARHGTPDSRLLAEIIHAGGWTSNEGGGISYNVPYAKNVTIEKSLLDWQYCDRLVGFYEEQGVHINREPFGPLTGTLVPPSMSNAVGITEALLAAEQGVKNITVGYGECGNMIQDIAALRCLEEQTNEYLKAYGYNDVFVTTVFHQWMGGFPQDESKAFGVIVTATTIAALAGATKVIVKTPHEAIGIPTKEANAAGIKATKMALNMLEGQRMPMSKELETEMAVIKAETKCILDKMFELGKGDLAIGTVKAFETGVMDIPFGPSKYNAGKMMPVRDNLGCVRYLEFGNVPFTEEIKNYNRERLQERAKFEGRDVSFQMVIDDIFAVGKGRLIGRPE.

Arg-66 is a binding site for L-glutamate. Gly-68 contributes to the adenosylcob(III)alamin binding site. Arg-100 is a binding site for L-glutamate. Position 123 (Asn-123) interacts with adenosylcob(III)alamin. Residues 149–150 (RH), Glu-171, and Tyr-177 contribute to the L-glutamate site. An adenosylcob(III)alamin-binding site is contributed by Pro-180. Tyr-181 serves as a coordination point for L-glutamate. The adenosylcob(III)alamin site is built by Phe-297, Lys-326, Glu-330, and Ile-334.

It belongs to the methylaspartate mutase GlmE subunit family. As to quaternary structure, heterotetramer composed of 2 epsilon subunits (GlmE) and 2 sigma subunits (GlmS). GlmE exists as a homodimer and GlmS as a monomer. Requires adenosylcob(III)alamin as cofactor.

It carries out the reaction (2S,3S)-3-methyl-L-aspartate = L-glutamate. Its pathway is amino-acid degradation; L-glutamate degradation via mesaconate pathway; acetate and pyruvate from L-glutamate: step 1/4. Its activity is regulated as follows. Competitively inhibited by (2S,4S)-4-fluoroglutamate, 2-methyleneglutarate, (2R,3RS)-3-fluoroglutamate and (S)-3-methylitaconate. In terms of biological role, catalyzes the carbon skeleton rearrangement of L-glutamate to L-threo-3-methylaspartate ((2S,3S)-3-methylaspartate). This is Glutamate mutase epsilon subunit from Clostridium cochlearium.